Consider the following 62-residue polypeptide: Mu-elapitoxin-Na1a (62 aa).

Intrachain disulfides connect Cys3–Cys22, Cys15–Cys40, Cys44–Cys55, and Cys56–Cys61.

This sequence belongs to the three-finger toxin family. Short-chain subfamily. Orphan group XV sub-subfamily. In terms of tissue distribution, expressed by the venom gland.

It is found in the secreted. In terms of biological role, potent inhibitor of human Nav1.8/SCN10A (IC(50)=141-380 nM). Is highly selective for this channel and acts in a reversible manner. Shows a depolarizing shift of activation and hyperpolarizing shift of inactivation. In contrast to the very similar cytotoxin A5 (AC P62375), does not seem to bind integrin alpha-V/beta-3, since it does not promote or inhibit the proliferation of HUVECs and C-PAE cells. In vivo, in rodent models of inflammatory and neuropathic pain, it alleviates nociceptive behaviors more potently than does morphine. It displays no evident cytotoxic, hemolytic and cardiotoxic activities and produces no obvious adverse responses in mice even at a dose 30-fold higher than that producing a significant analgesic effect. This Naja atra (Chinese cobra) protein is Mu-elapitoxin-Na1a.